A 440-amino-acid polypeptide reads, in one-letter code: Enolase (440 aa).

Substrate is bound by residues His159 and Glu168. Residue Glu211 is the Proton donor of the active site. The Mg(2+) site is built by Asp245, Glu296, and Asp321. Residues Glu296 and Asp321 each coordinate substrate. The active-site Proton acceptor is the Lys346. Substrate is bound by residues 373 to 376 (SHRS) and Lys397.

The protein belongs to the enolase family. As to quaternary structure, homodimer. It depends on Mg(2+) as a cofactor.

It is found in the cytoplasm. The enzyme catalyses (2R)-2-phosphoglycerate = phosphoenolpyruvate + H2O. It participates in carbohydrate degradation; glycolysis; pyruvate from D-glyceraldehyde 3-phosphate: step 4/5. In Tuber borchii (White truffle), this protein is Enolase (eno-1).